A 140-amino-acid polypeptide reads, in one-letter code: UPF0654 protein C22G7.11c (140 aa).

Disordered regions lie at residues 1 to 88 and 110 to 140; these read MPDP…DPMK and YKAT…ETQA. Basic and acidic residues predominate over residues 24–33; it reads AKERAEDYIE. The segment covering 34 to 44 has biased composition (polar residues); that stretch reads SHSSGQETGDY. A compositionally biased stretch (acidic residues) spans 54–71; that stretch reads DYEDLGDYDEDADFDNEE.

Belongs to the UPF0654 (con-6) family.

The polypeptide is UPF0654 protein C22G7.11c (Schizosaccharomyces pombe (strain 972 / ATCC 24843) (Fission yeast)).